The chain runs to 229 residues: Flagellar L-ring protein (229 aa).

The first 25 residues, 1–25, serve as a signal peptide directing secretion; sequence MKQVRLLPSAAVRAACALAAAALAG. A lipid anchor (N-palmitoyl cysteine) is attached at Cys26. Residue Cys26 is the site of S-diacylglycerol cysteine attachment.

This sequence belongs to the FlgH family. In terms of assembly, the basal body constitutes a major portion of the flagellar organelle and consists of four rings (L,P,S, and M) mounted on a central rod.

The protein localises to the cell outer membrane. It is found in the bacterial flagellum basal body. In terms of biological role, assembles around the rod to form the L-ring and probably protects the motor/basal body from shearing forces during rotation. This chain is Flagellar L-ring protein, found in Burkholderia multivorans (strain ATCC 17616 / 249).